A 188-amino-acid chain; its full sequence is Peptidyl-tRNA hydrolase (188 aa).

Residue tyrosine 17 coordinates tRNA. Catalysis depends on histidine 22, which acts as the Proton acceptor. Tyrosine 65, asparagine 67, and asparagine 113 together coordinate tRNA.

It belongs to the PTH family. As to quaternary structure, monomer.

It is found in the cytoplasm. The catalysed reaction is an N-acyl-L-alpha-aminoacyl-tRNA + H2O = an N-acyl-L-amino acid + a tRNA + H(+). Its function is as follows. Hydrolyzes ribosome-free peptidyl-tRNAs (with 1 or more amino acids incorporated), which drop off the ribosome during protein synthesis, or as a result of ribosome stalling. Functionally, catalyzes the release of premature peptidyl moieties from peptidyl-tRNA molecules trapped in stalled 50S ribosomal subunits, and thus maintains levels of free tRNAs and 50S ribosomes. This chain is Peptidyl-tRNA hydrolase, found in Mycoplasma pneumoniae (strain ATCC 29342 / M129 / Subtype 1) (Mycoplasmoides pneumoniae).